Here is a 522-residue protein sequence, read N- to C-terminus: E3 ubiquitin-protein ligase TRIM65 (522 aa).

At Ala-2 the chain carries N-acetylalanine. The segment at 13–52 adopts an RING-type zinc-finger fold; that stretch reads CSICLGRYRDPVTLPCGHSFCGNCIQDSWRSCEKSCPECR. The B box-type zinc finger occupies 92–134; sequence SHSARCLRHGRPLEFFCRTEGLCVCSACTVHDCSHHERALLDV. A coiled-coil region spans residues 141–229; that stretch reads DQLRARVLVT…QRLTDHLRAL (89 aa). Ser-187 carries the phosphoserine modification. One can recognise a B30.2/SPRY domain in the interval 316-509; that stretch reads APVPSAVCPL…LTLCHQPEAT (194 aa).

Belongs to the TRIM/RBCC family. As to quaternary structure, homo-multimerizes. Interacts with ARRDC4.

It localises to the cytoplasm. The enzyme catalyses S-ubiquitinyl-[E2 ubiquitin-conjugating enzyme]-L-cysteine + [acceptor protein]-L-lysine = [E2 ubiquitin-conjugating enzyme]-L-cysteine + N(6)-ubiquitinyl-[acceptor protein]-L-lysine.. Its pathway is protein modification; protein ubiquitination. In terms of biological role, E3 ubiquitin ligase that plays a role in several processes including innate immnity, autophagy or inflammation. Negatively regulates miRNAs by modulating the ubiquitination and stability of TNRC6A, a protein involved in RNA-mediated gene silencing by both micro-RNAs (miRNAs) and short interfering RNAs. This ubiquitination results in the suppressed expression of miR-138-5p leading to increased autophagy. Upon enteroviral infection, promotes 'Lys-63'-mediated ubiquitination activation of IFIH1/MDA5 leading to innate signaling cascade. Mechanistically, selectively recognizes MDA5 filaments that occur on dsRNAs. Also plays a role in limitation of inflammation through different mechanisms. First, promotes 'Lys-48'-mediated ubiquitination of VCAM1 leading to its degradation and limitation of LPS-induced lung inflammation. In addition, negatively regulates inflammasome activation by promoting 'lys48'-linked ubiquitination of NLRP3 which is critical for the inhibition of NLRP3 inflammasome activation in resting macrophages. The polypeptide is E3 ubiquitin-protein ligase TRIM65 (Trim65) (Mus musculus (Mouse)).